A 318-amino-acid polypeptide reads, in one-letter code: NLP effector protein 9 (318 aa).

The signal sequence occupies residues M1–A19. Residues T24–P35 are compositionally biased toward low complexity. Disordered stretches follow at residues T24–Y43 and L50–T93. Residues P55–P65 show a composition bias toward polar residues. N60 is a glycosylation site (N-linked (GlcNAc...) asparagine). Pro residues predominate over residues P73–T93. A Conserved undecapeptide motif I motif is present at residues A185 to D195. The short motif at G202–E208 is the Hepta-peptide GHRHDWE motif II element.

Belongs to the Necrosis inducing protein (NPP1) family.

It localises to the secreted. Functionally, secreted effector that contributes to virulence during infection by P.capsici. Induces distinct chlorosis at 3 days after inoculation of host C.annuum leaves, and all the chlorotic areas gradually turn brown and become moderately necrotic at 7 days after inoculation. Caused only small necrotic areas at 7 days after non-host N.benthamiana leaves infection. In Phytophthora capsici, this protein is NLP effector protein 9.